Consider the following 189-residue polypeptide: Transcription factor FapR (189 aa).

It belongs to the FapR family.

Functionally, transcriptional factor involved in regulation of membrane lipid biosynthesis by repressing genes involved in fatty acid and phospholipid metabolism. This is Transcription factor FapR from Listeria monocytogenes serotype 4b (strain CLIP80459).